The chain runs to 261 residues: Uridine-cytidine kinase 2 (261 aa).

Positions 1-16 (MAGDSEQTLQNHQQPN) are enriched in polar residues. The tract at residues 1-24 (MAGDSEQTLQNHQQPNGGEPFLIG) is disordered. At Ala2 the chain carries N-acetylalanine. ATP is bound at residue 27–35 (GGTASGKSS). Substrate contacts are provided by Asp84, Tyr112, His117, Arg166, Arg176, and Gln184. Residue Asp213 participates in ATP binding. Residues 236-261 (RQTNGCLNGYTPSRKRQASESSSRPH) are disordered. Ser254 carries the phosphoserine modification.

Belongs to the uridine kinase family. In terms of assembly, homotetramer. As to expression, according to PubMed:8812458; testis-specific. According to PubMed:11306702, placenta-specific.

The enzyme catalyses uridine + ATP = UMP + ADP + H(+). It carries out the reaction cytidine + ATP = CMP + ADP + H(+). It participates in pyrimidine metabolism; CTP biosynthesis via salvage pathway; CTP from cytidine: step 1/3. The protein operates within pyrimidine metabolism; UMP biosynthesis via salvage pathway; UMP from uridine: step 1/1. Its function is as follows. Phosphorylates uridine and cytidine to uridine monophosphate and cytidine monophosphate. Does not phosphorylate deoxyribonucleosides or purine ribonucleosides. Can use ATP or GTP as a phosphate donor. Can also phosphorylate cytidine and uridine nucleoside analogs such as 6-azauridine, 5-fluorouridine, 4-thiouridine, 5-bromouridine, N(4)-acetylcytidine, N(4)-benzoylcytidine, 5-fluorocytidine, 2-thiocytidine, 5-methylcytidine, and N(4)-anisoylcytidine. In Homo sapiens (Human), this protein is Uridine-cytidine kinase 2 (UCK2).